A 1818-amino-acid chain; its full sequence is Unconventional myosin-Vb (1818 aa).

Positions 8 to 60 (TRYTRVWIPDPDEVWRSAELTKDYKEGDKSLQLRLEDDTILEYPVDVQNNQVP) constitute a Myosin N-terminal SH3-like domain. Positions 21 to 40 (VWRSAELTKDYKEGDKSLQL) are requires for interaction with LIMA1. The region spanning 69-762 (VGENDLTALS…QVAYLEKLRA (694 aa)) is the Myosin motor domain. Position 163–170 (163–170 (GESGAGKT)) interacts with ATP. Residues 641-663 (LNLLMETLNATTPHYVRCIKPND) form an actin-binding region. IQ domains lie at 765-794 (FREA…ATLS), 788-817 (LRAA…TRAA), 813-842 (RTRA…ATVI), 836-865 (VCRA…EHKA), 861-890 (MEHK…AAIV), and 884-913 (ERDA…EARS). Disordered regions lie at residues 1086–1120 (LRDE…EIGD) and 1161–1188 (QAQL…VDQD). Residues 1098-1118 (PSNQSSLESDSNYPSISTSEI) are compositionally biased toward polar residues. Coiled coils occupy residues 1140 to 1261 (MTVF…LILR) and 1313 to 1415 (LEAQ…ALAQ). Ser-1416 carries the phosphoserine modification. The Dilute domain maps to 1496-1773 (SSTINGIKKV…IRTIQAQLQE (278 aa)).

This sequence belongs to the TRAFAC class myosin-kinesin ATPase superfamily. Myosin family. Component of the CART complex, at least composed of ACTN4, HGS/HRS, MYO5B and TRIM3. Interacts with RAB11FIP2. Interacts with RAB11A and RAB8A. Found in a complex with CFTR and RAB11A. Interacts with NPC1L1. Interacts with LIMA1.

Its subcellular location is the cytoplasm. In terms of biological role, may be involved in vesicular trafficking via its association with the CART complex. The CART complex is necessary for efficient transferrin receptor recycling but not for EGFR degradation. Required in a complex with RAB11A and RAB11FIP2 for the transport of NPC1L1 to the plasma membrane. Together with RAB11A participates in CFTR trafficking to the plasma membrane and TF (transferrin) recycling in nonpolarized cells. Together with RAB11A and RAB8A participates in epithelial cell polarization. Together with RAB25 regulates transcytosis. Required for proper localization of bile salt export pump ABCB11 at the apical/canalicular plasma membrane of hepatocytes. This chain is Unconventional myosin-Vb (Myo5b), found in Mus musculus (Mouse).